The chain runs to 360 residues: Arginase, non-hepatic 3 (360 aa).

Residues His122, Asp145, His147, and Asp149 each coordinate Mn(2+). Substrate contacts are provided by residues 147–151 (HADIN), 158–160 (SGN), and Asp204. Mn(2+)-binding residues include Asp253 and Asp255. The substrate site is built by Thr267 and Glu298.

The protein belongs to the arginase family. Homotrimer. It depends on Mn(2+) as a cofactor. In terms of tissue distribution, expressed at differing tadpole stages in tail, intestine, hindlimb and trunk region. Strongest in tadpole tail.

It catalyses the reaction L-arginine + H2O = urea + L-ornithine. The protein operates within nitrogen metabolism; urea cycle; L-ornithine and urea from L-arginine: step 1/1. Its function is as follows. As well as its role in the urea cycle, may be involved in tissue remodeling. This is Arginase, non-hepatic 3 (arg2-c) from Xenopus laevis (African clawed frog).